The chain runs to 121 residues: Large ribosomal subunit protein uL22c (121 aa).

The protein belongs to the universal ribosomal protein uL22 family. In terms of assembly, part of the 50S ribosomal subunit.

It localises to the plastid. The protein resides in the chloroplast. This protein binds specifically to 23S rRNA. In terms of biological role, the globular domain of the protein is located near the polypeptide exit tunnel on the outside of the subunit, while an extended beta-hairpin is found that lines the wall of the exit tunnel in the center of the 70S ribosome. In Welwitschia mirabilis (Tree tumbo), this protein is Large ribosomal subunit protein uL22c (rpl22).